Consider the following 191-residue polypeptide: Adenylate kinase (191 aa).

11–16 provides a ligand contact to ATP; the sequence is GAGKGT. Residues 31 to 60 are NMP; that stretch reads STGDILRSNVAERSPLGIKAKDYMDKGDLV. AMP is bound by residues Thr-32, Arg-37, 58–60, 86–89, and Gln-93; these read DLV and GFPR. The segment at 132-138 is LID; sequence SRKREDD. Arg-133 is a binding site for ATP. AMP-binding residues include Arg-135 and Arg-146. ATP is bound at residue Asn-174.

This sequence belongs to the adenylate kinase family. In terms of assembly, monomer.

It is found in the cytoplasm. The enzyme catalyses AMP + ATP = 2 ADP. Its pathway is purine metabolism; AMP biosynthesis via salvage pathway; AMP from ADP: step 1/1. In terms of biological role, catalyzes the reversible transfer of the terminal phosphate group between ATP and AMP. Plays an important role in cellular energy homeostasis and in adenine nucleotide metabolism. This chain is Adenylate kinase, found in Trichodesmium erythraeum (strain IMS101).